Consider the following 763-residue polypeptide: Thyrotropin receptor (763 aa).

Positions 1-21 (MRPTPLLRLALFLVLPSSLGG) are cleaved as a signal peptide. Topologically, residues 22–412 (ERCPSPPCEC…EFNPCEDIMG (391 aa)) are extracellular. An intrachain disulfide couples cysteine 31 to cysteine 41. An LRR 1 repeat occupies 51–74 (PPSTQTLKFIETHLKTIPSRAFSN). Residues asparagine 77 and asparagine 99 are each glycosylated (N-linked (GlcNAc...) asparagine). LRR repeat units lie at residues 125-150 (LPLLKFLGIFNTGLRVFPDLTKIYST), 151-174 (DVFFILEITDNPYMTSIPANAFQG), 176-199 (CNETLTLKLYNNGFTSIQGHAFNG), 201-223 (KLDAVYLNKNKYLTVIGQDAFAG), and 225-248 (YSGPTLLDISYTSVTALPSKGLEH). Residues asparagine 177 and asparagine 198 are each glycosylated (N-linked (GlcNAc...) asparagine). N-linked (GlcNAc...) asparagine glycosylation occurs at asparagine 302. Tyrosine 384 carries the post-translational modification Sulfotyrosine. Residues 413–440 (YKFLRIVVWFVSLLALLGNVFVLVILLT) form a helical membrane-spanning segment. The Cytoplasmic portion of the chain corresponds to 441 to 449 (SHYKLTVPR). Residues 450–472 (FLMCNLAFADFCMGLYLLLIASV) form a helical membrane-spanning segment. Over 473–493 (DLYTQSEYYNHAIDWQTGPGC) the chain is Extracellular. An intrachain disulfide couples cysteine 493 to cysteine 568. Residues 494–516 (NTAGFFTVFASELSVYTLTVITL) form a helical membrane-spanning segment. Residues 517 to 536 (ERWHAITFAMRLDRKIRLWH) are Cytoplasmic-facing. The chain crosses the membrane as a helical span at residues 537–559 (AYVIMLGGWVCCFLLALLPLVGI). The Extracellular portion of the chain corresponds to 560-579 (SSYAKVSICLPMDTETPLAL). The helical transmembrane segment at 580-601 (AYIILVLLLNIIAFIIVCACYV) threads the bilayer. Residues 602–624 (KIYITVRNPHYNPGDKDTRIAKR) lie on the Cytoplasmic side of the membrane. A helical transmembrane segment spans residues 625–648 (MAVLIFTDFMCMAPISFYALSALM). The Extracellular segment spans residues 649–659 (NKPLITVTNSK). A helical membrane pass occupies residues 660-681 (ILLVLFYPLNSCANPFLYAIFT). The Cytoplasmic portion of the chain corresponds to 682-763 (KAFQRDVFML…TSKEYKRTVL (82 aa)). The tract at residues 742 to 763 (ENSHLTPKQQDQTSKEYKRTVL) is disordered. A compositionally biased stretch (polar residues) spans 744-753 (SHLTPKQQDQ). Basic and acidic residues predominate over residues 754–763 (TSKEYKRTVL). A PDZ-binding motif is present at residues 761-763 (TVL).

Belongs to the G-protein coupled receptor 1 family. FSH/LSH/TSH subfamily. As to quaternary structure, interacts with heterodimer GPHA2:GPHB5; this interaction stimulates cAMP production. Interacts (via the PDZ-binding motif) with SCRIB; regulates TSHR trafficking and function. In terms of processing, glycosylated. Sulfated. Sulfation on Tyr-384 plays a role in thyrotropin receptor binding and activation.

The protein resides in the cell membrane. The protein localises to the basolateral cell membrane. In terms of biological role, receptor for the thyroid-stimulating hormone (TSH) or thyrotropin. Also acts as a receptor for the heterodimeric glycoprotein hormone (GPHA2:GPHB5) or thyrostimulin. The activity of this receptor is mediated by G proteins which activate adenylate cyclase. Plays a central role in controlling thyroid cell metabolism. The polypeptide is Thyrotropin receptor (TSHR) (Bos taurus (Bovine)).